We begin with the raw amino-acid sequence, 132 residues long: Protein NrdI (132 aa).

This sequence belongs to the NrdI family.

Its function is as follows. Probably involved in ribonucleotide reductase function. The chain is Protein NrdI from Staphylococcus epidermidis (strain ATCC 35984 / DSM 28319 / BCRC 17069 / CCUG 31568 / BM 3577 / RP62A).